The sequence spans 30 residues: Varv peptide B (30 aa).

A cross-link (cyclopeptide (Gly-Asn)) is located at residues 1–30 (GLPVCGETCFGGTCNTPGCSCDPWPMCSRN). 3 disulfides stabilise this stretch: C5–C19, C9–C21, and C14–C27.

Post-translationally, this is a cyclic peptide.

Its function is as follows. Probably participates in a plant defense mechanism. This is Varv peptide B from Viola arvensis (European field pansy).